Here is a 140-residue protein sequence, read N- to C-terminus: Extracellular globin-1 (140 aa).

The Globin domain occupies 1–140 (ECDVLERFKV…YDFIASGIKP (140 aa)). A disulfide bridge connects residues Cys2 and Cys130. His93 contacts heme b.

Belongs to the globin family. In terms of assembly, the giant hemoglobins of worms are formed of a monomeric subunit and a disulfide-bonded trimer. This subunit is monomeric.

It is found in the secreted. This is Extracellular globin-1 from Metaphire hilgendorfi (Earthworm).